We begin with the raw amino-acid sequence, 470 residues long: Pyruvate kinase I (470 aa).

R32 serves as a coordination point for substrate. Positions 34, 36, 66, and 67 each coordinate K(+). Position 34 to 37 (34 to 37) interacts with ATP; the sequence is NFSH. Positions 73 and 156 each coordinate ATP. E222 is a binding site for Mg(2+). Substrate-binding residues include G245, D246, and T278. Residue D246 participates in Mg(2+) binding.

Belongs to the pyruvate kinase family. As to quaternary structure, homotetramer. Requires Mg(2+) as cofactor. It depends on K(+) as a cofactor.

The catalysed reaction is pyruvate + ATP = phosphoenolpyruvate + ADP + H(+). It functions in the pathway carbohydrate degradation; glycolysis; pyruvate from D-glyceraldehyde 3-phosphate: step 5/5. The sequence is that of Pyruvate kinase I (pykF) from Salmonella typhi.